The sequence spans 529 residues: MQTSQKHHSAAGLHMLYPQVYCSPQFQAKDNKGFSDIPSKENFFTLESSTASGSLPSYDSPSVSITSGRSPFSPQGSQSCISDLHHSPDNVYGSPLSGVSSLAYDEAGVKSKIRELEVSLLSGDTKVEEFSGFSPAAGKSWNWDELLALTPQLDLKEVLVEAARAVADGDFATAYGFLDVLEQMVSVSGSPIQRLGTYMAEGLRARLEGSGSNIYKSLKCNEPTGRELMSYMSVLYEICPYWKFAYTTANVEILEAIAGETRVHIIDFQIAQGSQYMFLIQELAKRPGGPPLLRVTGVDDSQSTYARGGGLSLVGERLATLAQSCGVPFEFHDAIMSGCKVQREHLGLEPGFAVVVNFPYVLHHMPDESVSVENHRDRLLHLIKSLSPKLVTLVEQESNTNTSPFLSRFVETLDYYTAMFESIDAARPRDDKQRISAEQHCVARDIVNMIACEESERVERHEVLGKWRVRMMMAGFTGWPVSTSAAFAASEMLKAYDKNYKLGGHEGALYLFWKRRPMATCSVWKPNPN.

Residues 51 to 81 (ASGSLPSYDSPSVSITSGRSPFSPQGSQSCI) are compositionally biased toward polar residues. The disordered stretch occupies residues 51-84 (ASGSLPSYDSPSVSITSGRSPFSPQGSQSCISDL). In terms of domain architecture, GRAS spans 146–525 (LLALTPQLDL…RPMATCSVWK (380 aa)). Residues 153–213 (LDLKEVLVEA…RARLEGSGSN (61 aa)) form a leucine repeat I (LRI) region. Residues 232–297 (MSVLYEICPY…GGPPLLRVTG (66 aa)) form a VHIID region. The short motif at 263–267 (VHIID) is the VHIID element. The segment at 313 to 345 (LVGERLATLAQSCGVPFEFHDAIMSGCKVQREH) is leucine repeat II (LRII). Positions 354 to 448 (VVVNFPYVLH…QHCVARDIVN (95 aa)) are PFYRE. Residues 451–525 (ACEESERVER…RPMATCSVWK (75 aa)) are SAW.

It belongs to the GRAS family. As to expression, expressed in roots, hypocotyls, cotyledons, shoot apex, leaves, flowers and siliques.

It localises to the cytoplasm. It is found in the nucleus. Probable transcription factor that acts as a positive regulator of continuous red light signals downstream of phytochrome B (phyB). Required for the regulation of hypocotyl elongation during de-etiolation. May be required to modulate phytochrome A (phyA) signal transduction in a phyB-independent way. This is Scarecrow-like protein 13 (SCL13) from Arabidopsis thaliana (Mouse-ear cress).